The primary structure comprises 23 residues: Potassium channel toxin alpha-KTx 13.1 (23 aa).

Intrachain disulfides connect cysteine 2-cysteine 15, cysteine 5-cysteine 20, and cysteine 9-cysteine 22. The tract at residues 13–20 (GKCINGRC) is interaction with Ca(2+)-activated K(+) channels.

As to expression, expressed by the venom gland.

The protein resides in the secreted. In terms of biological role, blocks reversibly Shaker B potassium channels. Also displaces binding of noxiustoxin to mouse brain synaptosome membranes. The chain is Potassium channel toxin alpha-KTx 13.1 from Tityus obscurus (Amazonian scorpion).